The following is a 496-amino-acid chain: Endoglucanase (496 aa).

The first 23 residues, 1–23 (MGYHSVFIAVFLWSSMVCHNGLA), serve as a signal peptide directing secretion. The active-site Nucleophile is the Asp-93. Residues His-415, Asp-467, and Glu-476 contribute to the active site.

This sequence belongs to the glycosyl hydrolase 9 (cellulase E) family.

The catalysed reaction is Endohydrolysis of (1-&gt;4)-beta-D-glucosidic linkages in cellulose, lichenin and cereal beta-D-glucans.. In terms of biological role, involved in ripening fruit process. This is Endoglucanase from Phaseolus vulgaris (Kidney bean).